A 91-amino-acid polypeptide reads, in one-letter code: Small ribosomal subunit protein bS16 (91 aa).

This sequence belongs to the bacterial ribosomal protein bS16 family.

This is Small ribosomal subunit protein bS16 from Phytoplasma australiense.